We begin with the raw amino-acid sequence, 65 residues long: Large ribosomal subunit protein bL35 (65 aa).

Residues 1–28 (MPKLKTRKAAARRFKATGSGKIKRRKAF) are disordered.

It belongs to the bacterial ribosomal protein bL35 family.

This chain is Large ribosomal subunit protein bL35, found in Trichodesmium erythraeum (strain IMS101).